A 401-amino-acid polypeptide reads, in one-letter code: Argininosuccinate synthase (401 aa).

8 to 16 (AYSGGLDTS) provides a ligand contact to ATP. Y85 provides a ligand contact to L-citrulline. ATP is bound at residue G115. Residues T117, N121, and D122 each contribute to the L-aspartate site. N121 is an L-citrulline binding site. R125, S173, E258, and Y270 together coordinate L-citrulline.

This sequence belongs to the argininosuccinate synthase family. Type 1 subfamily. In terms of assembly, homotetramer.

It is found in the cytoplasm. The catalysed reaction is L-citrulline + L-aspartate + ATP = 2-(N(omega)-L-arginino)succinate + AMP + diphosphate + H(+). It participates in amino-acid biosynthesis; L-arginine biosynthesis; L-arginine from L-ornithine and carbamoyl phosphate: step 2/3. The sequence is that of Argininosuccinate synthase from Staphylococcus epidermidis (strain ATCC 35984 / DSM 28319 / BCRC 17069 / CCUG 31568 / BM 3577 / RP62A).